A 729-amino-acid polypeptide reads, in one-letter code: Glycine--tRNA ligase, mitochondrial 1 (729 aa).

The residue at position 1 (M1) is an N-acetylmethionine. Residues 1 to 28 (MRIFSTFVFHRRQQIFNLRQFQTTTILR) constitute a mitochondrion transit peptide. The 57-residue stretch at 50–106 (SLSEKSSSVEAQGNAVRALKASRAAKPEIDAAIEQLNKLKLEKSTVEKELQSIISSS) folds into the WHEP-TRS domain. E296 is a binding site for glycine. Residues 328-330 (RNE) and 339-340 (RV) each bind ATP. E347 contributes to the glycine binding site. 454-455 (EC) contacts ATP. Residue 575–577 (EPS) participates in glycine binding. Residue R582 coordinates ATP.

This sequence belongs to the class-II aminoacyl-tRNA synthetase family. Homodimer.

Its subcellular location is the mitochondrion. The protein resides in the cytoplasm. It is found in the cytosol. The enzyme catalyses tRNA(Gly) + glycine + ATP = glycyl-tRNA(Gly) + AMP + diphosphate. It carries out the reaction 2 ATP + H(+) = P(1),P(4)-bis(5'-adenosyl) tetraphosphate + diphosphate. Functionally, catalyzes the ATP-dependent ligation of glycine to the 3'-end of its cognate tRNA, via the formation of an aminoacyl-adenylate intermediate (Gly-AMP). Also produces diadenosine tetraphosphate (Ap4A), a universal pleiotropic signaling molecule needed for cell regulation pathways, by direct condensation of 2 ATPs. Thereby, may play a special role in Ap4A homeostasis. The polypeptide is Glycine--tRNA ligase, mitochondrial 1 (Arabidopsis thaliana (Mouse-ear cress)).